Here is a 441-residue protein sequence, read N- to C-terminus: Tubulin beta-1 chain (441 aa).

8 residues coordinate GTP: Gln-11, Glu-69, Ser-138, Gly-142, Thr-143, Gly-144, Asn-204, and Asn-226. Glu-69 contributes to the Mg(2+) binding site.

It belongs to the tubulin family. Dimer of alpha and beta chains. A typical microtubule is a hollow water-filled tube with an outer diameter of 25 nm and an inner diameter of 15 nM. Alpha-beta heterodimers associate head-to-tail to form protofilaments running lengthwise along the microtubule wall with the beta-tubulin subunit facing the microtubule plus end conferring a structural polarity. Microtubules usually have 13 protofilaments but different protofilament numbers can be found in some organisms and specialized cells. Requires Mg(2+) as cofactor. In terms of tissue distribution, expressed primarily in touch receptor neurons.

Its subcellular location is the cytoplasm. The protein localises to the cytoskeleton. In terms of biological role, TTubulin is the major constituent of microtubules, a cylinder consisting of laterally associated linear protofilaments composed of alpha- and beta-tubulin heterodimers. Microtubules grow by the addition of GTP-tubulin dimers to the microtubule end, where a stabilizing cap forms. Below the cap, tubulin dimers are in GDP-bound state, owing to GTPase activity of alpha-tubulin. Plays a role in mechanosensory transduction (touch sensitivity). Functionally, mec-7 beta-tubulin is required for the production of 15-protofilament microtubules. The polypeptide is Tubulin beta-1 chain (mec-7) (Caenorhabditis elegans).